A 154-amino-acid polypeptide reads, in one-letter code: MIIKNLQEFYPLLIPNAPLIAIDYGSKKLGIALSNQERNIAMPLNTIIEINKKIVITSLLSIIEKYKVCGVVIGLPIDMSGAVTEQTNIVMKFAEELAKSINLPIYLQDERLTTKAANNFLKSFGVKRKDRNNNDDAVAASMILETVLDSMKKL.

It belongs to the YqgF nuclease family.

It localises to the cytoplasm. Could be a nuclease involved in processing of the 5'-end of pre-16S rRNA. The protein is Putative pre-16S rRNA nuclease of Rickettsia felis (strain ATCC VR-1525 / URRWXCal2) (Rickettsia azadi).